A 396-amino-acid polypeptide reads, in one-letter code: S-adenosylmethionine synthase (396 aa).

ATP is bound at residue H16. D18 is a Mg(2+) binding site. Position 44 (E44) interacts with K(+). L-methionine is bound by residues E57 and Q100. Residues 100 to 110 are flexible loop; that stretch reads QSPDIAQGVDD. ATP contacts are provided by residues 174 to 176, 241 to 242, D250, 256 to 257, A273, and K277; these read DAK, RF, and RK. Residue D250 participates in L-methionine binding. K281 is a binding site for L-methionine.

This sequence belongs to the AdoMet synthase family. In terms of assembly, homotetramer; dimer of dimers. It depends on Mg(2+) as a cofactor. The cofactor is K(+).

The protein localises to the cytoplasm. The enzyme catalyses L-methionine + ATP + H2O = S-adenosyl-L-methionine + phosphate + diphosphate. It functions in the pathway amino-acid biosynthesis; S-adenosyl-L-methionine biosynthesis; S-adenosyl-L-methionine from L-methionine: step 1/1. In terms of biological role, catalyzes the formation of S-adenosylmethionine (AdoMet) from methionine and ATP. The overall synthetic reaction is composed of two sequential steps, AdoMet formation and the subsequent tripolyphosphate hydrolysis which occurs prior to release of AdoMet from the enzyme. This is S-adenosylmethionine synthase from Pediococcus pentosaceus (strain ATCC 25745 / CCUG 21536 / LMG 10740 / 183-1w).